The following is a 258-amino-acid chain: UPF0758 protein Bamb_2548 (258 aa).

The disordered stretch occupies residues 1-43 (MLSPCLAAPATECRDPADAPAAPARHTGPARPRKRRPRNWKPH). Positions 31-43 (RPRKRRPRNWKPH) are enriched in basic residues. Residues 136-258 (QIDSPGAVED…TFSFARAGWL (123 aa)) enclose the MPN domain. His-207, His-209, and Asp-220 together coordinate Zn(2+). Residues 207 to 220 (HNHPSGAVQPSAED) carry the JAMM motif motif.

It belongs to the UPF0758 family.

The polypeptide is UPF0758 protein Bamb_2548 (Burkholderia ambifaria (strain ATCC BAA-244 / DSM 16087 / CCUG 44356 / LMG 19182 / AMMD) (Burkholderia cepacia (strain AMMD))).